The chain runs to 462 residues: Acetate--CoA ligase [ADP-forming] I subunit alpha (462 aa).

It belongs to the acetate CoA ligase alpha subunit family. As to quaternary structure, heterotetramer of two alpha and two beta subunits.

The protein resides in the cytoplasm. It catalyses the reaction acetate + ATP + CoA = acetyl-CoA + ADP + phosphate. Activity is dependent on magnesium. Catalyzes the reversible formation of acetate and ATP from acetyl-CoA by using ADP and phosphate. Can use other substrates such as isobutyryl-CoA, propionyl-CoA and butyryl-CoA, but not indoleacetyl-CoA, phenylacetyl-CoA or succinyl-CoA. Seems to be involved primarily in the conversion of acetyl-CoA to acetate. Participates in the degradation of branched-chain amino acids via branched-chain-acyl-CoA esters. The sequence is that of Acetate--CoA ligase [ADP-forming] I subunit alpha from Pyrococcus furiosus (strain ATCC 43587 / DSM 3638 / JCM 8422 / Vc1).